Consider the following 81-residue polypeptide: ATP synthase subunit c (81 aa).

2 helical membrane-spanning segments follow: residues 6-26 (ASAS…GPGI) and 57-77 (LAFM…LLFA).

The protein belongs to the ATPase C chain family. As to quaternary structure, F-type ATPases have 2 components, F(1) - the catalytic core - and F(0) - the membrane proton channel. F(1) has five subunits: alpha(3), beta(3), gamma(1), delta(1), epsilon(1). F(0) has four main subunits: a(1), b(1), b'(1) and c(10-14). The alpha and beta chains form an alternating ring which encloses part of the gamma chain. F(1) is attached to F(0) by a central stalk formed by the gamma and epsilon chains, while a peripheral stalk is formed by the delta, b and b' chains.

The protein localises to the cellular thylakoid membrane. In terms of biological role, f(1)F(0) ATP synthase produces ATP from ADP in the presence of a proton or sodium gradient. F-type ATPases consist of two structural domains, F(1) containing the extramembraneous catalytic core and F(0) containing the membrane proton channel, linked together by a central stalk and a peripheral stalk. During catalysis, ATP synthesis in the catalytic domain of F(1) is coupled via a rotary mechanism of the central stalk subunits to proton translocation. Its function is as follows. Key component of the F(0) channel; it plays a direct role in translocation across the membrane. A homomeric c-ring of between 10-14 subunits forms the central stalk rotor element with the F(1) delta and epsilon subunits. In Gloeothece citriformis (strain PCC 7424) (Cyanothece sp. (strain PCC 7424)), this protein is ATP synthase subunit c.